The primary structure comprises 513 residues: Alpha,alpha-trehalose-phosphate synthase [UDP-forming] (513 aa).

Position 40 is a phosphotyrosine (Y40). Positions 104 and 158 each coordinate D-glucose 6-phosphate. 2 residues coordinate UDP: R294 and K299. R294 and K299 together coordinate UDP-alpha-D-glucose. Residue R332 coordinates D-glucose 6-phosphate. Residue D393–E401 participates in UDP-alpha-D-glucose binding. L397–E401 serves as a coordination point for UDP. S503 carries the post-translational modification Phosphoserine.

The protein belongs to the glycosyltransferase 20 family. As to quaternary structure, homomer. Component of the trehalose synthase complex that contains at least tps1, ntp1 and tpp1. Interacts with tpp1. Interacts with ntp1; the interaction is independent of stress conditions.

The protein resides in the cytoplasm. It localises to the nucleus. The catalysed reaction is D-glucose 6-phosphate + UDP-alpha-D-glucose = alpha,alpha-trehalose 6-phosphate + UDP + H(+). It participates in carbohydrate biosynthesis. Functionally, synthase catalytic subunit of the trehalose synthase complex that catalyzes the production of trehalose from glucose-6-phosphate and UDP-alpha-D-glucose in a two step process. The disaccharide trehalose serves as a storage carbohydrate that is mobilized during nutrient stress and spore germination. Together with ntp1, regulates the level of trehalose as a protectant for cell integrity during thermal and osmotic stress. This Schizosaccharomyces pombe (strain 972 / ATCC 24843) (Fission yeast) protein is Alpha,alpha-trehalose-phosphate synthase [UDP-forming].